The sequence spans 263 residues: Uroporphyrinogen-III C-methyltransferase (263 aa).

Residues proline 20, 96–98 (GGD), 126–127 (TA), methionine 180, and alanine 237 each bind S-adenosyl-L-homocysteine.

This sequence belongs to the precorrin methyltransferase family.

The enzyme catalyses uroporphyrinogen III + 2 S-adenosyl-L-methionine = precorrin-2 + 2 S-adenosyl-L-homocysteine + H(+). The protein operates within cofactor biosynthesis; adenosylcobalamin biosynthesis; precorrin-2 from uroporphyrinogen III: step 1/1. It functions in the pathway porphyrin-containing compound metabolism; siroheme biosynthesis; precorrin-2 from uroporphyrinogen III: step 1/1. Catalyzes the two successive C-2 and C-7 methylation reactions involved in the conversion of uroporphyrinogen III to precorrin-2 via the intermediate formation of precorrin-1. It is a step in the biosynthesis of both cobalamin (vitamin B12) and siroheme. This Synechocystis sp. (strain ATCC 27184 / PCC 6803 / Kazusa) protein is Uroporphyrinogen-III C-methyltransferase (cobA).